The following is a 556-amino-acid chain: Glucose-6-phosphate isomerase (556 aa).

Glu-363 serves as the catalytic Proton donor. Active-site residues include His-394 and Lys-522.

Belongs to the GPI family.

It localises to the cytoplasm. It carries out the reaction alpha-D-glucose 6-phosphate = beta-D-fructose 6-phosphate. The protein operates within carbohydrate biosynthesis; gluconeogenesis. Its pathway is carbohydrate degradation; glycolysis; D-glyceraldehyde 3-phosphate and glycerone phosphate from D-glucose: step 2/4. In terms of biological role, catalyzes the reversible isomerization of glucose-6-phosphate to fructose-6-phosphate. In Frankia casuarinae (strain DSM 45818 / CECT 9043 / HFP020203 / CcI3), this protein is Glucose-6-phosphate isomerase.